Here is a 198-residue protein sequence, read N- to C-terminus: Probable GTP-binding protein EngB (198 aa).

One can recognise an EngB-type G domain in the interval 22 to 195 (DLPEIALAGR…WKAIHKFTKT (174 aa)). GTP is bound by residues 30–37 (GRSNVGKS), 57–61 (GKTQT), 75–78 (DVPG), 142–145 (TKAD), and 174–176 (FSS). Mg(2+) contacts are provided by Ser-37 and Thr-59.

It belongs to the TRAFAC class TrmE-Era-EngA-EngB-Septin-like GTPase superfamily. EngB GTPase family. It depends on Mg(2+) as a cofactor.

Its function is as follows. Necessary for normal cell division and for the maintenance of normal septation. This is Probable GTP-binding protein EngB from Bacillus anthracis (strain A0248).